The chain runs to 172 residues: Adrenodoxin homolog, mitochondrial (172 aa).

Residues 1 to 16 (MLKIVTRAGHTARISN) constitute a mitochondrion transit peptide. Residues 61–163 (LKITFILKDG…GIRVALPQMT (103 aa)) enclose the 2Fe-2S ferredoxin-type domain. Residues Cys98, Cys104, Cys107, and Cys144 each coordinate [2Fe-2S] cluster.

It belongs to the adrenodoxin/putidaredoxin family. Interacts in its reduced state with the apo form of ISU1. [2Fe-2S] cluster is required as a cofactor.

The protein localises to the mitochondrion matrix. Functionally, iron-sulfur protein that transfers electrons in a wide variety of metabolic reactions. Involved in heme A biosynthesis and in iron-sulfur cluster assembly. Transfers electrons from adrenodoxin reductase ARH1 to heme A synthase COX15, a heme protein that catalyzes the conversion of heme O to heme A. Required for the de novo synthesis of Fe-S clusters on iron sulfur cluster assembly protein ISU1. Interact in its reduced state with ISU1 to productively deliver electrons for Fe-S cluster synthesis. Essential for coenzyme Q biosynthesis. May transfer the electrons required for the hydroxylation reaction performed by COQ6. This chain is Adrenodoxin homolog, mitochondrial, found in Saccharomyces cerevisiae (strain ATCC 204508 / S288c) (Baker's yeast).